The chain runs to 365 residues: Putative ankyrin repeat protein R903 (365 aa).

ANK repeat units lie at residues 38–67 (NINS…DIRF), 68–97 (QNNE…DIFI), 99–127 (NNFC…KFSN), 129–158 (SKPI…NINK), 184–213 (KFKD…GNIT), 214–243 (VSNN…RFPR), 245–273 (SNEL…SIVD), 275–298 (LLNI…LKNV), 299–328 (NLQK…NPDE), and 330–361 (RTYL…KLQS).

This Acanthamoeba polyphaga mimivirus (APMV) protein is Putative ankyrin repeat protein R903.